A 72-amino-acid polypeptide reads, in one-letter code: Threonine dehydratase operon activator protein (72 aa).

Its function is as follows. Probable trans-acting positive activator for the tdc operon. The sequence is that of Threonine dehydratase operon activator protein (tdcR) from Escherichia coli (strain K12).